The primary structure comprises 684 residues: Probable metal-nicotianamine transporter YSL9 (684 aa).

Over residues 1 to 10 the composition is skewed to basic residues; that stretch reads MKQERRRKRQ. The tract at residues 1 to 55 is disordered; it reads MKQERRRKRQPGPPRLELVVAHPREEEMAGLDGGGDAEEGATHARGGGGAPPPWR. Helical transmembrane passes span 58 to 78, 82 to 102, 130 to 150, 174 to 194, 234 to 254, 295 to 315, 341 to 361, 402 to 422, 430 to 450, 462 to 482, 515 to 535, 568 to 588, 612 to 632, and 642 to 662; these read LTARGLVASLAVGAMYSVIVM, LTTGLVPTLNVSAALIAFVVL, CAVACYSIAVGGGFGSYLLGL, GIAWMTGFLLAVSFVGLLALV, VNGFTKYFAMSFFWSFFQWFY, LVNLSLLLGAILSWGVMWPLI, FICVALILGDGLYNFVKIVAL, LAFSGYLGLTFIAVIAIPMMF, VVIAYLLAPALGFCNAYGAGL, IALFILAAWAGKDSGVVAGLV, IIAQAIGTVMGCVISPLTFFL, FSALPQHCLQLCYGFFGFAVA, VPFLVGASFAIDMCIGSLIVF, and AALMVPAVASGLICGDGLWIF.

It belongs to the YSL (TC 2.A.67.2) family.

It is found in the membrane. Functionally, may be involved in the transport of nicotianamine-chelated metals. The protein is Probable metal-nicotianamine transporter YSL9 (YSL9) of Oryza sativa subsp. japonica (Rice).